The sequence spans 81 residues: Large ribosomal subunit protein bL31B (81 aa).

This sequence belongs to the bacterial ribosomal protein bL31 family. Type B subfamily. Part of the 50S ribosomal subunit.

The protein is Large ribosomal subunit protein bL31B of Borrelia garinii subsp. bavariensis (strain ATCC BAA-2496 / DSM 23469 / PBi) (Borreliella bavariensis).